The sequence spans 509 residues: MELIEKLQPIKKPLMVLGTSSGAGKSLTVTAIGRILKNSGEEPIPFKGQNMSNNAWVDWNGGEMAFSQALQAFACGIIPSSEMNPILLKPQGNSTSEVIHLGKSKGITTAKDYYKDWFFPGWGVIKKSLNSIYERYPNCRLIIEGAGSPVEMNLIHRDLTNLRVAKYLNANCILVTDIERGGVFAQIIGTLELMKPDERKLIKGILINRFRGDLSLFEEGKKWIENKTKIPVLGIIPWLDDKFPPEDSLDLLEKKSSLTNPELKVGIIKLPSISNFSDFDPLENEESILIKWVMESQNLNQYDFLIIPGSKQTIKDQKFLRDSGLSEDIKNYSTNKGNIFGICGGLQMLGTILEDPFFKEGSKINCEKSINGIGLLPLKTTFFQKKITRQINSESIWPQVTEINGFEIHNGVTELDNSQDTFKIKPIFKDLDLGWYKENIQGGTIAGTYIHGIFENDDWRDHYLNLIRKGKNLPLLKKRTRSYKMKRENIIDNLANEFKKNFNISSLLN.

One can recognise a GATase cobBQ-type domain in the interval 262–459 (ELKVGIIKLP…IHGIFENDDW (198 aa)). Cys-343 acts as the Nucleophile in catalysis. The active site involves His-451.

Belongs to the CobB/CobQ family. CobQ subfamily.

Its pathway is cofactor biosynthesis; adenosylcobalamin biosynthesis. Catalyzes amidations at positions B, D, E, and G on adenosylcobyrinic A,C-diamide. NH(2) groups are provided by glutamine, and one molecule of ATP is hydrogenolyzed for each amidation. The sequence is that of Cobyric acid synthase from Prochlorococcus marinus subsp. pastoris (strain CCMP1986 / NIES-2087 / MED4).